Here is a 630-residue protein sequence, read N- to C-terminus: Plastin-1 (630 aa).

A fimbrin headpiece region spans residues 1 to 114 (MENNVTTISR…LGGTSSISTE (114 aa)). EF-hand domains follow at residues 11 to 46 (EELE…ASLP) and 51 to 86 (KVRE…LKSK). Ca(2+)-binding residues include aspartate 24, aspartate 26, serine 28, tyrosine 30, glutamate 35, aspartate 64, asparagine 66, aspartate 68, lysine 70, and glutamate 75. Actin-binding regions lie at residues 108-375 (TSSI…LFNT) and 376-624 (YPAL…LMGR). Residues 115 to 630 (GTQHSYSEEE…LMGRGLNKIK (516 aa)) form a fimbrin core region. Calponin-homology (CH) domains are found at residues 122–238 (EEEK…KVGL), 266–377 (LSPE…NTYP), 396–505 (SNEE…RRYT), and 517–626 (KVND…GRGL).

As to quaternary structure, monomer. Post-translationally, the N-terminus is blocked.

Its subcellular location is the cytoplasm. The protein resides in the cell projection. The protein localises to the stereocilium. Functionally, actin-bundling protein. In the inner ear, it is required for stereocilia formation. Mediates liquid packing of actin filaments that is necessary for stereocilia to grow to their proper dimensions. This Gallus gallus (Chicken) protein is Plastin-1 (PLS1).